Here is a 36-residue protein sequence, read N- to C-terminus: HFIDVKCTTSKECWPPCKAATGKAAGKCMNKKCKCQ.

The protein belongs to the short scorpion toxin superfamily. Potassium channel inhibitor family. Alpha-KTx 01 subfamily. Expressed by the venom gland.

The protein resides in the secreted. In terms of biological role, potent selective inhibitor of Kv1/KCNA voltage-gated potassium channels. This is Potassium channel toxin alpha-KTx 1.9 from Centruroides limbatus (Bark scorpion).